The following is a 691-amino-acid chain: Elongation factor G 1 (691 aa).

The tr-type G domain maps to 8-282 (ERVRNIGIAA…AVVDYLPAPQ (275 aa)). GTP-binding positions include 17-24 (AHIDAGKT), 81-85 (DTPGH), and 135-138 (NKMD).

Belongs to the TRAFAC class translation factor GTPase superfamily. Classic translation factor GTPase family. EF-G/EF-2 subfamily.

It localises to the cytoplasm. Its function is as follows. Catalyzes the GTP-dependent ribosomal translocation step during translation elongation. During this step, the ribosome changes from the pre-translocational (PRE) to the post-translocational (POST) state as the newly formed A-site-bound peptidyl-tRNA and P-site-bound deacylated tRNA move to the P and E sites, respectively. Catalyzes the coordinated movement of the two tRNA molecules, the mRNA and conformational changes in the ribosome. The sequence is that of Elongation factor G 1 from Trichodesmium erythraeum (strain IMS101).